The chain runs to 196 residues: Large ribosomal subunit protein uL18 (196 aa).

It belongs to the universal ribosomal protein uL18 family. As to quaternary structure, part of the 50S ribosomal subunit. Contacts the 5S and 23S rRNAs.

Its function is as follows. This is one of the proteins that bind and probably mediate the attachment of the 5S RNA into the large ribosomal subunit, where it forms part of the central protuberance. The chain is Large ribosomal subunit protein uL18 from Thermofilum pendens (strain DSM 2475 / Hrk 5).